Consider the following 349-residue polypeptide: GDP-mannose:glycolipid 4-beta-D-mannosyltransferase (349 aa).

Residues 1–14 (MSASASLPVTRAAA) form the signal peptide.

It belongs to the glycosyltransferase 94 family.

Its subcellular location is the cell inner membrane. The enzyme catalyses beta-D-GlcA-(1-&gt;2)-alpha-D-Man-(1-&gt;3)-beta-D-Glc-(1-&gt;4)-alpha-D-Glc-di-trans,octa-cis-undecaprenyl diphosphate + GDP-alpha-D-mannose = beta-D-Man-(1-&gt;4)-beta-D-GlcA-(1-&gt;2)-alpha-D-Man-(1-&gt;3)-beta-D-Glc-(1-&gt;4)-alpha-D-Glc-di-trans,octa-cis-undecaprenyl diphosphate + GDP + H(+). It participates in glycan biosynthesis; xanthan biosynthesis. Nonprocessive beta-mannosyltransferase that catalyzes the transfer of a mannose residue from GDP-mannose to glucuronic acid-beta-1,2-mannose-alpha-1,3-glucose-beta-1,4-glucose-PP-polyisoprenyl to form the lipid-linked pentasaccharide repeating unit of xanthan, Man-GlcA-Man-Glc(2)-PP-Pol. Is involved in the biosynthesis of the exopolysaccharide xanthan. This chain is GDP-mannose:glycolipid 4-beta-D-mannosyltransferase (gumI), found in Xanthomonas campestris pv. campestris (strain ATCC 33913 / DSM 3586 / NCPPB 528 / LMG 568 / P 25).